The sequence spans 150 residues: UPF0260 protein VIBHAR_03078 (150 aa).

This sequence belongs to the UPF0260 family.

In Vibrio campbellii (strain ATCC BAA-1116), this protein is UPF0260 protein VIBHAR_03078.